A 237-amino-acid chain; its full sequence is Oligoribonuclease, mitochondrial (237 aa).

The N-terminal 25 residues, 1 to 25 (MLGGSLGSRLLRGVGGTRGQFRARG), are a transit peptide targeting the mitochondrion. One can recognise an Exonuclease domain in the interval 43-207 (MVWVDLEMTG…DDISESIKEL (165 aa)). Residues D47 and E49 each coordinate Mg(2+). Position 92 is a phosphoserine (S92). Y122 is modified (phosphotyrosine). Mg(2+) is bound at residue D147. At K173 the chain carries N6-acetyllysine. The active site involves H194. D199 provides a ligand contact to Mg(2+).

The protein belongs to the oligoribonuclease family. In terms of assembly, homodimer. Homotetramer. It depends on Mn(2+) as a cofactor. Mg(2+) serves as cofactor.

The protein localises to the mitochondrion intermembrane space. It is found in the mitochondrion matrix. Its subcellular location is the mitochondrion. It localises to the cytoplasm. The protein resides in the nucleus. In terms of biological role, 3'-to-5'exoribonuclease that preferentially degrades DNA and RNA oligonucleotides composed of only two nucleotides. Binds and degrades longer oligonucleotides with a lower affinity. Plays dual roles in mitochondria, scavenging nanoRNAs (small RNA oligonucleotides of &lt;5 nucleotides) that are produced by the degradosome and clearing short RNAs that are generated by RNA processing. Essential for correct initiation of mitochondrial transcription, degrading mitochondrial RNA dinucleotides to prevent RNA-primed transcription at non-canonical sites in the mitochondrial genome. Essential for embryonic development. The polypeptide is Oligoribonuclease, mitochondrial (REXO2) (Bos taurus (Bovine)).